The chain runs to 80 residues: Toxin-like peptide AaF1CA1 (80 aa).

The first 22 residues, 1-22, serve as a signal peptide directing secretion; the sequence is MMKLVLFSVIVILFSLIGSIHG. The LCN-type CS-alpha/beta domain occupies 25–80; it reads VPGNYPLRPFRYRYGCAVPGDSDYCVRVCRKHGVRYGYCWFFTCWCEYLEDKNIKI. 3 disulfides stabilise this stretch: C40–C63, C49–C68, and C53–C70.

The protein belongs to the long (3 C-C) scorpion toxin superfamily. As to expression, expressed by the venom gland.

It localises to the secreted. Its function is as follows. Probable ion channel inhibitor. The polypeptide is Toxin-like peptide AaF1CA1 (Androctonus australis (Sahara scorpion)).